A 396-amino-acid chain; its full sequence is Elongation factor Tu (396 aa).

Residues 10-205 (KEHVNIGTIG…AVDNYIETPV (196 aa)) form the tr-type G domain. The interval 19 to 26 (GHVDHGKT) is G1. 19-26 (GHVDHGKT) contacts GTP. Thr-26 is a Mg(2+) binding site. Residues 60 to 64 (GITIN) form a G2 region. The segment at 81-84 (DCPG) is G3. Residues 81 to 85 (DCPGH) and 136 to 139 (NKVD) contribute to the GTP site. The interval 136 to 139 (NKVD) is G4. Positions 175-177 (SAL) are G5.

Belongs to the TRAFAC class translation factor GTPase superfamily. Classic translation factor GTPase family. EF-Tu/EF-1A subfamily. As to quaternary structure, monomer.

The protein localises to the cytoplasm. It carries out the reaction GTP + H2O = GDP + phosphate + H(+). In terms of biological role, GTP hydrolase that promotes the GTP-dependent binding of aminoacyl-tRNA to the A-site of ribosomes during protein biosynthesis. The chain is Elongation factor Tu from Mycoplasmopsis pulmonis (strain UAB CTIP) (Mycoplasma pulmonis).